A 324-amino-acid polypeptide reads, in one-letter code: MKLAFIIDPIHQLDPCHDTSVALMEAAQILGHEVWVTQANWLSVVDSKAWAILQQVELVPVQLIDGRWVAASPWYTLNTRSFSSLETMDAVFMRTDPPVNDAYLYATYVLDYVDQRKTLVINNPNGIRGANEKMYALQFTKAIPETIVSADKDFIRQFVEAKGATVLKPLGNKAGEGILFLQAGDRNFNSIVELSTQQGRLPVMVQTYLPEAKEGDKRIILLNGEPIGALNRLASGSDFRNNMATGGTVAKTEITPREEEICSQIAANLRQDGLIFVGIDVIGGYLTEVNVTSPTGIREIDRLDGTRLAHQVIQWVEKNLQIQN.

The ATP-grasp domain maps to 133-317 (KMYALQFTKA…LAHQVIQWVE (185 aa)). 159-215 (VEAKGATVLKPLGNKAGEGILFLQAGDRNFNSIVELSTQQGRLPVMVQTYLPEAKEG) lines the ATP pocket. 2 residues coordinate Mg(2+): Glu-288 and Asn-290.

Belongs to the prokaryotic GSH synthase family. Requires Mg(2+) as cofactor. It depends on Mn(2+) as a cofactor.

It catalyses the reaction gamma-L-glutamyl-L-cysteine + glycine + ATP = glutathione + ADP + phosphate + H(+). It functions in the pathway sulfur metabolism; glutathione biosynthesis; glutathione from L-cysteine and L-glutamate: step 2/2. This is Glutathione synthetase from Nostoc sp. (strain PCC 7120 / SAG 25.82 / UTEX 2576).